We begin with the raw amino-acid sequence, 470 residues long: Rhamnulokinase (470 aa).

12–16 contributes to the ATP binding site; the sequence is ASSGR. Substrate-binding positions include A80 and 237-239; that span reads HDT. The Proton acceptor role is filled by D238. ATP is bound at residue T259. N296 is a binding site for substrate. Residue Q304 participates in ATP binding. A disulfide bridge links C353 with C370. Residue G402 coordinates ATP.

Belongs to the rhamnulokinase family. It depends on Mg(2+) as a cofactor.

It carries out the reaction L-rhamnulose + ATP = L-rhamnulose 1-phosphate + ADP + H(+). Its pathway is carbohydrate degradation; L-rhamnose degradation; glycerone phosphate from L-rhamnose: step 2/3. Functionally, involved in the catabolism of L-rhamnose (6-deoxy-L-mannose). Catalyzes the transfer of the gamma-phosphate group from ATP to the 1-hydroxyl group of L-rhamnulose to yield L-rhamnulose 1-phosphate. This chain is Rhamnulokinase, found in Oceanobacillus iheyensis (strain DSM 14371 / CIP 107618 / JCM 11309 / KCTC 3954 / HTE831).